We begin with the raw amino-acid sequence, 314 residues long: Homoserine O-acetyltransferase (314 aa).

The active-site Acyl-thioester intermediate is the cysteine 142. Lysine 163 and serine 192 together coordinate substrate. Catalysis depends on histidine 235, which acts as the Proton acceptor. Glutamate 237 is an active-site residue. Arginine 249 serves as a coordination point for substrate.

This sequence belongs to the MetA family.

The protein resides in the cytoplasm. It catalyses the reaction L-homoserine + acetyl-CoA = O-acetyl-L-homoserine + CoA. Its pathway is amino-acid biosynthesis; L-methionine biosynthesis via de novo pathway; O-acetyl-L-homoserine from L-homoserine: step 1/1. Functionally, transfers an acetyl group from acetyl-CoA to L-homoserine, forming acetyl-L-homoserine. The protein is Homoserine O-acetyltransferase of Desulfovibrio desulfuricans (strain ATCC 27774 / DSM 6949 / MB).